The chain runs to 690 residues: Protein MODIFIED TRANSPORT TO THE VACUOLE 1 (690 aa).

Residues 20–150 (VTSDEDKVAP…PESINRRIEG (131 aa)) enclose the VHS domain. Disordered stretches follow at residues 228–258 (DGNY…SVRV) and 518–551 (FSID…HQAP). A compositionally biased stretch (low complexity) spans 243-257 (GHASGEASESSASVR). Positions 520-536 (IDENNSNQKGSSSSTLP) are enriched in polar residues.

In terms of assembly, binds to clathrin heavy chain. In terms of tissue distribution, expressed in inflorescence stems, stigmas, roots, roots meristems, embryos, and floral and leaf vasculatures, but absent from the floral abscission zone.

The protein resides in the golgi apparatus. The protein localises to the trans-Golgi network. It is found in the cytoplasmic vesicle. It localises to the clathrin-coated vesicle. Functionally, mediates clathrin-dependent trafficking of vacuolar cargo from the trans-Golgi network (TGN). Promotes plant growth. This is Protein MODIFIED TRANSPORT TO THE VACUOLE 1 from Arabidopsis thaliana (Mouse-ear cress).